A 308-amino-acid chain; its full sequence is 4-hydroxy-3-methylbut-2-enyl diphosphate reductase (308 aa).

Cys-12 contributes to the [4Fe-4S] cluster binding site. (2E)-4-hydroxy-3-methylbut-2-enyl diphosphate-binding residues include His-43 and His-77. Residues His-43 and His-77 each contribute to the dimethylallyl diphosphate site. 2 residues coordinate isopentenyl diphosphate: His-43 and His-77. [4Fe-4S] cluster is bound at residue Cys-99. His-127 contributes to the (2E)-4-hydroxy-3-methylbut-2-enyl diphosphate binding site. Position 127 (His-127) interacts with dimethylallyl diphosphate. Residue His-127 participates in isopentenyl diphosphate binding. The Proton donor role is filled by Glu-129. Thr-167 contributes to the (2E)-4-hydroxy-3-methylbut-2-enyl diphosphate binding site. Position 197 (Cys-197) interacts with [4Fe-4S] cluster. Residues Ser-225, Ser-226, Asn-227, and Ser-269 each contribute to the (2E)-4-hydroxy-3-methylbut-2-enyl diphosphate site. 4 residues coordinate dimethylallyl diphosphate: Ser-225, Ser-226, Asn-227, and Ser-269. Isopentenyl diphosphate contacts are provided by Ser-225, Ser-226, Asn-227, and Ser-269.

The protein belongs to the IspH family. [4Fe-4S] cluster is required as a cofactor.

The catalysed reaction is isopentenyl diphosphate + 2 oxidized [2Fe-2S]-[ferredoxin] + H2O = (2E)-4-hydroxy-3-methylbut-2-enyl diphosphate + 2 reduced [2Fe-2S]-[ferredoxin] + 2 H(+). The enzyme catalyses dimethylallyl diphosphate + 2 oxidized [2Fe-2S]-[ferredoxin] + H2O = (2E)-4-hydroxy-3-methylbut-2-enyl diphosphate + 2 reduced [2Fe-2S]-[ferredoxin] + 2 H(+). The protein operates within isoprenoid biosynthesis; dimethylallyl diphosphate biosynthesis; dimethylallyl diphosphate from (2E)-4-hydroxy-3-methylbutenyl diphosphate: step 1/1. It participates in isoprenoid biosynthesis; isopentenyl diphosphate biosynthesis via DXP pathway; isopentenyl diphosphate from 1-deoxy-D-xylulose 5-phosphate: step 6/6. Catalyzes the conversion of 1-hydroxy-2-methyl-2-(E)-butenyl 4-diphosphate (HMBPP) into a mixture of isopentenyl diphosphate (IPP) and dimethylallyl diphosphate (DMAPP). Acts in the terminal step of the DOXP/MEP pathway for isoprenoid precursor biosynthesis. In Wolbachia pipientis subsp. Culex pipiens (strain wPip), this protein is 4-hydroxy-3-methylbut-2-enyl diphosphate reductase.